Reading from the N-terminus, the 314-residue chain is tRNA dimethylallyltransferase 2 (314 aa).

Position 8–15 (8–15 (GPTGSGKS)) interacts with ATP. Residue 10-15 (TGSGKS) coordinates substrate.

This sequence belongs to the IPP transferase family. In terms of assembly, monomer. Mg(2+) is required as a cofactor.

It catalyses the reaction adenosine(37) in tRNA + dimethylallyl diphosphate = N(6)-dimethylallyladenosine(37) in tRNA + diphosphate. Its function is as follows. Catalyzes the transfer of a dimethylallyl group onto the adenine at position 37 in tRNAs that read codons beginning with uridine, leading to the formation of N6-(dimethylallyl)adenosine (i(6)A). This chain is tRNA dimethylallyltransferase 2, found in Mycobacterium marinum (strain ATCC BAA-535 / M).